The chain runs to 21 residues: Pseudogermin (21 aa).

The protein belongs to the germin family. As to quaternary structure, homotetramer.

Its subcellular location is the secreted. The protein resides in the extracellular space. The protein localises to the apoplast. It localises to the cell wall. In terms of biological role, may subsume the role of germin at the low water potentials during embryogenesis. The sequence is that of Pseudogermin from Triticum aestivum (Wheat).